Consider the following 279-residue polypeptide: MDTELLKTFLEVSRTRHFGRAAESLYLTQSAVSFRIRQLENQLGVNLFTRHRNNIRLTAAGEKLLPYAETLMSTWQAARKEVAHTSRHNEFSIGASASLWECMLNQWLGRLYKNQDAHTGLQFEARIAQRQSLVKQLHERQLDLLITTEAPKMDEFSSQLLGYFTLALYTSAPSKLKGDLNYLRLEWGPDFQQHEAGLIGADEVPILTTSSAELAQQQIATLNGCTWLPVSWARKKGGLHTVVDSTTLSRPLYAIWLQNSDKNALIRDLLKINVLDEVY.

The HTH lysR-type domain maps to 1–58 (MDTELLKTFLEVSRTRHFGRAAESLYLTQSAVSFRIRQLENQLGVNLFTRHRNNIRLT). The H-T-H motif DNA-binding region spans 18-37 (FGRAAESLYLTQSAVSFRIR).

This sequence belongs to the LysR transcriptional regulatory family.

Negatively regulates the transcription of the flagellar master operon flhDC by binding to the upstream region of the operon. The polypeptide is HTH-type transcriptional regulator HdfR (Escherichia coli O17:K52:H18 (strain UMN026 / ExPEC)).